The primary structure comprises 820 residues: G-type lectin S-receptor-like serine/threonine-protein kinase At1g11300 (820 aa).

The first 26 residues, 1–26 (MRLHESSSPFVCILVLSCFFLSVSLA), serve as a signal peptide directing secretion. One can recognise a Bulb-type lectin domain in the interval 27–150 (QERAFFSGKL…SSDAYLWESF (124 aa)). Residues 27–436 (QERAFFSGKL…SEIKTKDKRP (410 aa)) are Extracellular-facing. 10 N-linked (GlcNAc...) asparagine glycosylation sites follow: asparagine 37, asparagine 58, asparagine 87, asparagine 115, asparagine 123, asparagine 173, asparagine 211, asparagine 247, asparagine 256, and asparagine 282. The region spanning 290-326 (PATECDNYRRCGEFATCNPRKNPLCSCIRGFRPRNLI) is the EGF-like; atypical domain. 2 disulfides stabilise this stretch: cysteine 294-cysteine 306 and cysteine 300-cysteine 314. 2 N-linked (GlcNAc...) asparagine glycosylation sites follow: asparagine 332 and asparagine 351. Residues 345–425 (CERQNNNGSA…SGLDLYIRLA (81 aa)) form the PAN domain. Cystine bridges form between cysteine 379-cysteine 400 and cysteine 383-cysteine 389. N-linked (GlcNAc...) asparagine glycosylation occurs at asparagine 404. Residues 437–457 (ILIGTILAGGIFVVAACVLLA) traverse the membrane as a helical segment. At 458–820 (RRIVMKKRAK…NVTITDVTGR (363 aa)) the chain is on the cytoplasmic side. The Protein kinase domain occupies 509 to 788 (FSLRNKLGQG…DIPEPKQPAF (280 aa)). Residues 515–523 (LGQGGFGPV) and lysine 537 each bind ATP. Residues 598–615 (RRAKLLDWKTRFNIINGI) are caM-binding. Catalysis depends on aspartate 634, which acts as the Proton acceptor.

This sequence belongs to the protein kinase superfamily. Ser/Thr protein kinase family.

It localises to the cell membrane. It catalyses the reaction L-seryl-[protein] + ATP = O-phospho-L-seryl-[protein] + ADP + H(+). The catalysed reaction is L-threonyl-[protein] + ATP = O-phospho-L-threonyl-[protein] + ADP + H(+). This Arabidopsis thaliana (Mouse-ear cress) protein is G-type lectin S-receptor-like serine/threonine-protein kinase At1g11300.